Reading from the N-terminus, the 272-residue chain is Transcription factor E2F6 (272 aa).

The segment at 1–62 is binding to corepressors; sequence MSQQRTARRQ…MRKALKVKRP (62 aa). A DNA-binding region spans residues 50–129; sequence YVSMRKALKV…SKNHIRWIGS (80 aa). The DEF box signature appears at 95 to 129; the sequence is KLGVRKRRVYDITNVLDGIELVEKKSKNHIRWIGS. The interval 130–222 is dimerization; sequence DLNNFGAAPQ…PAPREDSITV (93 aa). A leucine-zipper region spans residues 143–164; it reads LQAELSDLSAMEDALDELIKDC. Positions 173 to 272 are transcription repression; that stretch reads DDKENERLAY…CPEKEDEPPQ (100 aa). Positions 242–272 are disordered; that stretch reads HSNGKTNDGIGASPSKSSHPQCPEKEDEPPQ.

The protein belongs to the E2F/DP family. As to quaternary structure, forms heterodimers with DP family members TFDP1 or TFDP2. Component of the DRTF1/E2F transcription factor complex. Part of the E2F6.com-1 complex in G0 phase composed of E2F6, MGA, MAX, TFDP1, CBX3, BAT8, EUHMTASE1, RING1, RNF2, MBLR, L3MBTL2 and YAF2. Component of some MLL1/MLL complex, at least composed of the core components KMT2A/MLL1, ASH2L, HCFC1/HCF1, WDR5 and RBBP5, as well as the facultative components BACC1, CHD8, E2F6, HSP70, INO80C, KANSL1, LAS1L, MAX, MCRS1, MGA, KAT8/MOF, PELP1, PHF20, PRP31, RING2, RUVB1/TIP49A, RUVB2/TIP49B, SENP3, TAF1, TAF4, TAF6, TAF7, TAF9 and TEX10.

It localises to the nucleus. In terms of biological role, inhibitor of E2F-dependent transcription. Binds DNA cooperatively with DP proteins through the E2 recognition site, 5'-TTTC[CG]CGC-3'. Has a preference for the 5'-TTTCCCGC-3' E2F recognition site. E2F6 lacks the transcriptional activation and pocket protein binding domains. Appears to regulate a subset of E2F-dependent genes whose products are required for entry into the cell cycle but not for normal cell cycle progression. Represses expression of some meiosis-specific genes, including SLC25A31/ANT4. May silence expression via the recruitment of a chromatin remodeling complex containing histone H3-K9 methyltransferase activity. Overexpression delays the exit of cells from the S-phase. This is Transcription factor E2F6 from Mus musculus (Mouse).